The chain runs to 638 residues: 1-deoxy-D-xylulose-5-phosphate synthase (638 aa).

Thiamine diphosphate-binding positions include His-71 and 112–114 (SHA). Mg(2+) is bound at residue Asp-144. Thiamine diphosphate-binding positions include 145-146 (GA), Asn-173, Tyr-284, and Glu-365. Asn-173 serves as a coordination point for Mg(2+).

Belongs to the transketolase family. DXPS subfamily. In terms of assembly, homodimer. Mg(2+) serves as cofactor. Requires thiamine diphosphate as cofactor.

It carries out the reaction D-glyceraldehyde 3-phosphate + pyruvate + H(+) = 1-deoxy-D-xylulose 5-phosphate + CO2. Its pathway is metabolic intermediate biosynthesis; 1-deoxy-D-xylulose 5-phosphate biosynthesis; 1-deoxy-D-xylulose 5-phosphate from D-glyceraldehyde 3-phosphate and pyruvate: step 1/1. In terms of biological role, catalyzes the acyloin condensation reaction between C atoms 2 and 3 of pyruvate and glyceraldehyde 3-phosphate to yield 1-deoxy-D-xylulose-5-phosphate (DXP). This is 1-deoxy-D-xylulose-5-phosphate synthase from Mycobacterium bovis (strain ATCC BAA-935 / AF2122/97).